The sequence spans 500 residues: Aldehyde dehydrogenase, mitochondrial (500 aa).

4 positions are modified to N6-acetyllysine: lysine 35, lysine 56, lysine 61, and lysine 142. 245 to 250 provides a ligand contact to NAD(+); the sequence is GSTEVG. The active-site Proton acceptor is glutamate 268. Residue cysteine 302 is the Nucleophile of the active site. An N6-acetyllysine mark is found at lysine 351, lysine 358, lysine 366, lysine 390, lysine 409, lysine 411, lysine 424, and lysine 434.

This sequence belongs to the aldehyde dehydrogenase family. In terms of assembly, homotetramer. Post-translationally, in response to mitochondrial stress, the precursor protein is ubiquitinated by the SIFI complex in the cytoplasm before mitochondrial import, leading to its degradation. Within the SIFI complex, UBR4 initiates ubiquitin chain that are further elongated or branched by KCMF1.

The protein resides in the mitochondrion matrix. It catalyses the reaction an aldehyde + NAD(+) + H2O = a carboxylate + NADH + 2 H(+). It participates in alcohol metabolism; ethanol degradation; acetate from ethanol: step 2/2. In terms of biological role, required for clearance of cellular formaldehyde, a cytotoxic and carcinogenic metabolite that induces DNA damage. This chain is Aldehyde dehydrogenase, mitochondrial (ALDH2), found in Mesocricetus auratus (Golden hamster).